Here is a 252-residue protein sequence, read N- to C-terminus: 2-succinyl-6-hydroxy-2,4-cyclohexadiene-1-carboxylate synthase (252 aa).

It belongs to the AB hydrolase superfamily. MenH family. Monomer.

The enzyme catalyses 5-enolpyruvoyl-6-hydroxy-2-succinyl-cyclohex-3-ene-1-carboxylate = (1R,6R)-6-hydroxy-2-succinyl-cyclohexa-2,4-diene-1-carboxylate + pyruvate. It functions in the pathway quinol/quinone metabolism; 1,4-dihydroxy-2-naphthoate biosynthesis; 1,4-dihydroxy-2-naphthoate from chorismate: step 3/7. It participates in quinol/quinone metabolism; menaquinone biosynthesis. Catalyzes a proton abstraction reaction that results in 2,5-elimination of pyruvate from 2-succinyl-5-enolpyruvyl-6-hydroxy-3-cyclohexene-1-carboxylate (SEPHCHC) and the formation of 2-succinyl-6-hydroxy-2,4-cyclohexadiene-1-carboxylate (SHCHC). This chain is 2-succinyl-6-hydroxy-2,4-cyclohexadiene-1-carboxylate synthase, found in Salmonella typhi.